The primary structure comprises 134 residues: Arsenate reductase (134 aa).

Active-site nucleophile residues include Cys-11, Cys-83, and Cys-90. 2 disulfide bridges follow: Cys-11/Cys-83 and Cys-83/Cys-90.

This sequence belongs to the low molecular weight phosphotyrosine protein phosphatase family. Thioredoxin-coupled ArsC subfamily.

It is found in the cytoplasm. The enzyme catalyses arsenate + [thioredoxin]-dithiol + H(+) = arsenite + [thioredoxin]-disulfide + H2O. Catalyzes the reduction of arsenate [As(V)] to arsenite [As(III)]. The polypeptide is Arsenate reductase (Bacillus cereus (strain G9842)).